Here is a 417-residue protein sequence, read N- to C-terminus: Autophagy-related protein 18 (417 aa).

WD repeat units follow at residues 1 to 36, 69 to 114, 139 to 182, 185 to 225, 230 to 269, 312 to 358, and 370 to 410; these read MAMNFVTFNQDYSYLAVATSKGFRIFTTDPFAKSYE, KRQS…LLYT, PLPQ…AINV, AHRS…KLYQ, SMPSRIFSMSFNTTSTLLCVSSSTETIHLFKLSQQTSSSR, KHNG…AWIK, and GNNG…GGEG. The L/FRRG motif signature appears at 226-230; it reads FRRGS. Residues 261 to 314 form a disordered region; the sequence is LSQQTSSSRDTSPSSSTPAGRDRAFSQSSLGHSPDRSDVSGEPDSSEFPARKHN. Low complexity predominate over residues 262–278; that stretch reads SQQTSSSRDTSPSSSTP.

Belongs to the WD repeat PROPPIN family. Component of the PI(3,5)P2 regulatory complex.

It localises to the preautophagosomal structure membrane. It is found in the vacuole membrane. Its subcellular location is the endosome membrane. Its function is as follows. The PI(3,5)P2 regulatory complex regulates both the synthesis and turnover of phosphatidylinositol 3,5-bisphosphate (PtdIns(3,5)P2). Necessary for proper vacuole morphology. Plays an important role in osmotically-induced vacuole fragmentation. Required for cytoplasm to vacuole transport (Cvt) vesicle formation, pexophagy and starvation-induced autophagy. Involved in correct atg9 trafficking to the pre-autophagosomal structure. Might also be involved in premeiotic DNA replication. The polypeptide is Autophagy-related protein 18 (atg18) (Aspergillus clavatus (strain ATCC 1007 / CBS 513.65 / DSM 816 / NCTC 3887 / NRRL 1 / QM 1276 / 107)).